The chain runs to 216 residues: Pyridoxine/pyridoxamine 5'-phosphate oxidase (216 aa).

Substrate contacts are provided by residues 12-15 (RREY) and Lys70. FMN is bound by residues 65-70 (RLVLLK), 80-81 (YT), Arg86, Lys87, and Gln109. 3 residues coordinate substrate: Tyr127, Arg131, and Ser135. FMN is bound by residues 144–145 (QS) and Trp189. Position 195-197 (195-197 (RMH)) interacts with substrate. Arg199 is a binding site for FMN.

This sequence belongs to the pyridoxamine 5'-phosphate oxidase family. Homodimer. FMN serves as cofactor.

It carries out the reaction pyridoxamine 5'-phosphate + O2 + H2O = pyridoxal 5'-phosphate + H2O2 + NH4(+). The catalysed reaction is pyridoxine 5'-phosphate + O2 = pyridoxal 5'-phosphate + H2O2. The protein operates within cofactor metabolism; pyridoxal 5'-phosphate salvage; pyridoxal 5'-phosphate from pyridoxamine 5'-phosphate: step 1/1. It functions in the pathway cofactor metabolism; pyridoxal 5'-phosphate salvage; pyridoxal 5'-phosphate from pyridoxine 5'-phosphate: step 1/1. Catalyzes the oxidation of either pyridoxine 5'-phosphate (PNP) or pyridoxamine 5'-phosphate (PMP) into pyridoxal 5'-phosphate (PLP). The sequence is that of Pyridoxine/pyridoxamine 5'-phosphate oxidase from Sodalis glossinidius (strain morsitans).